Here is a 208-residue protein sequence, read N- to C-terminus: 2-phospho-L-lactate guanylyltransferase (208 aa).

This sequence belongs to the CofC family. Homodimer.

The catalysed reaction is (2S)-2-phospholactate + GTP + H(+) = (2S)-lactyl-2-diphospho-5'-guanosine + diphosphate. It functions in the pathway cofactor biosynthesis; coenzyme F420 biosynthesis. Guanylyltransferase that catalyzes the activation of (2S)-2-phospholactate (2-PL) as (2S)-lactyl-2-diphospho-5'-guanosine, via the condensation of 2-PL with GTP. It is involved in the biosynthesis of coenzyme F420, a hydride carrier cofactor. The protein is 2-phospho-L-lactate guanylyltransferase of Haloarcula marismortui (strain ATCC 43049 / DSM 3752 / JCM 8966 / VKM B-1809) (Halobacterium marismortui).